Here is a 619-residue protein sequence, read N- to C-terminus: tRNA uridine 5-carboxymethylaminomethyl modification enzyme MnmG (619 aa).

Residues 14 to 19, valine 126, and serine 181 contribute to the FAD site; that span reads GAGHAG. 273–287 provides a ligand contact to NAD(+); it reads GPRYCPSIEDKIMRF. An FAD-binding site is contributed by glutamine 370.

Belongs to the MnmG family. Homodimer. Heterotetramer of two MnmE and two MnmG subunits. FAD serves as cofactor.

Its subcellular location is the cytoplasm. In terms of biological role, NAD-binding protein involved in the addition of a carboxymethylaminomethyl (cmnm) group at the wobble position (U34) of certain tRNAs, forming tRNA-cmnm(5)s(2)U34. This is tRNA uridine 5-carboxymethylaminomethyl modification enzyme MnmG from Syntrophotalea carbinolica (strain DSM 2380 / NBRC 103641 / GraBd1) (Pelobacter carbinolicus).